A 516-amino-acid chain; its full sequence is UDP-N-acetylmuramyl-tripeptide synthetase (516 aa).

Residue serine 36 coordinates UDP-N-acetyl-alpha-D-muramoyl-L-alanyl-D-glutamate. Position 113 to 119 (113 to 119) interacts with ATP; that stretch reads GTKGKTT. UDP-N-acetyl-alpha-D-muramoyl-L-alanyl-D-glutamate is bound by residues 159–160, serine 186, and arginine 194; that span reads TT. At lysine 228 the chain carries N6-carboxylysine.

This sequence belongs to the MurCDEF family. MurE subfamily. Carboxylation is probably crucial for Mg(2+) binding and, consequently, for the gamma-phosphate positioning of ATP.

The protein resides in the cytoplasm. The protein operates within cell wall biogenesis; peptidoglycan biosynthesis. In terms of biological role, catalyzes the addition of an amino acid to the nucleotide precursor UDP-N-acetylmuramoyl-L-alanyl-D-glutamate (UMAG) in the biosynthesis of bacterial cell-wall peptidoglycan. In Limosilactobacillus reuteri (strain DSM 20016) (Lactobacillus reuteri), this protein is UDP-N-acetylmuramyl-tripeptide synthetase.